A 386-amino-acid polypeptide reads, in one-letter code: CRISPR system endoribonuclease Csm6' (386 aa).

Residues 1–146 (MRVLISAVGD…ASNENIGHDN (146 aa)) are CARF domain. Residues 147-386 (DENIDELIEV…LNKILLTKLN (240 aa)) are HEPN domain.

It belongs to the CRISPR-associated Csm6 family. In terms of assembly, homodimer. The composite ssRNase active site is formed at the dimer interface.

With respect to regulation, non-specific ssRNase activity is stimulated about 1000-fold by cyclic oligoadenylate (cOA), a second messenger produced by Cas10 of the ternary Csm effector complex in the presence of a cognate target RNA. Functionally, CRISPR (clustered regularly interspaced short palindromic repeat) is an adaptive immune system that provides protection against mobile genetic elements (viruses, transposable elements and conjugative plasmids). CRISPR clusters contain spacers, sequences complementary to antecedent mobile elements, and target invading nucleic acids. CRISPR clusters are transcribed and processed into CRISPR RNA (crRNA). The type III-A Csm complex binds crRNA and acts as a crRNA-guided RNase, DNase and cyclic oligoadenylate synthase; binding of target RNA cognate to the crRNA is required for all activities. In a heterologous host this Csm effector complex restricts ssRNA phage MS2, suggesting it may target RNA viruses in vivo. This protein is not part of the Csm complex. Csm functions as a non-specific ssDNase. Base-pairing between crRNA and target RNA to form a ternary Csm complex activates a ssDNase activity; target RNA cleavage suppresses the ssDNase, a temporal control that prevents uncontrolled DNA degradation. Viral RNA transcripts probably tether the Csm complex to the viral genome, recruiting Cas10 ssDNA activity which is able to degrade DNA in the transcription bubble, spatially controlling the DNase activity. In terms of biological role, a single-strand-specific endoribonuclease (ssRNase) that is approximately 1000-fold stimulated by cyclic oligoadenylate (cOA); although several species of cOA are synthesized by this organism only cyclic hexaadenylate (cA6) stimulates the ssRNase activity. Cleaves preferentially within GA or AA dinucleotides, although the presence of cA6 broadens the preference. This Streptococcus thermophilus protein is CRISPR system endoribonuclease Csm6'.